We begin with the raw amino-acid sequence, 535 residues long: Intercellular adhesion molecule 1 (535 aa).

The N-terminal stretch at 1–27 is a signal peptide; sequence MALGAAPAAQLALLALLGTLLPGPGGA. Over 28–480 the chain is Extracellular; the sequence is GISIHPSKAI…LNVLHGQNIL (453 aa). The 62-residue stretch at 41 to 102 folds into the Ig-like C2-type 1 domain; it reads GDSLTVNCSN…SNCHKEQTIA (62 aa). The N-linked (GlcNAc...) asparagine glycan is linked to N47. 2 disulfides stabilise this stretch: C48–C91 and C52–C95. Residues N105 and N131 are each glycosylated (N-linked (GlcNAc...) asparagine). The Ig-like C2-type 2 domain maps to 127 to 193; that stretch reads GEELNLSCLV…FSCRWELDLR (67 aa). C134 and C186 form a disulfide bridge. A Cell attachment site; atypical motif is present at residues 151 to 153; the sequence is RGE. N-linked (GlcNAc...) asparagine glycans are attached at residues N183, N202, N236, N262, N302, N341, N357, N366, N404, and N428. Positions 230–295 constitute an Ig-like C2-type 3 domain; the sequence is GSRWPVNCTL…LKCSVTLGEV (66 aa). C237 and C288 are disulfide-bonded. Positions 323-376 constitute an Ig-like C2-type 4 domain; sequence WTTVTVECVTRDGAVVKLNGTSAVPPGPRAQLKLNASASDHRSNFSCSAALEIA. Disulfide bonds link C330-C369, C401-C417, C417-C456, and C429-C456. The region spanning 410-463 is the Ig-like C2-type 5 domain; that stretch reads GSEQTLKCEAQGNPIPKLNCSRKGDGASLPIGDLRPVRREVAGTYLCRATSARG. The chain crosses the membrane as a helical span at residues 481–503; that stretch reads DIVIPVVAVTLILGALGTAGYVY. At 504–535 the chain is on the cytoplasmic side; that stretch reads NYQRKIQKYELQKARKAQEEAALKLNAQSTPP. At T533 the chain carries Phosphothreonine.

Belongs to the immunoglobulin superfamily. ICAM family. In terms of assembly, homodimer. Interacts with MUC1 and promotes cell aggregation in epithelial cells. Interacts with ARHGEF26/SGEF. Interacts (on T cell side) with CD81, CD247 and CD9 at immunological synapses between antigen-presenting cells and T cells. In terms of processing, monoubiquitinated, which is promoted by MARCH9 and leads to endocytosis.

The protein resides in the membrane. ICAM proteins are ligands for the leukocyte adhesion protein LFA-1 (integrin alpha-L/beta-2). During leukocyte trans-endothelial migration, ICAM1 engagement promotes the assembly of endothelial apical cups through ARHGEF26/SGEF and RHOG activation. This is Intercellular adhesion molecule 1 (ICAM1) from Bos taurus (Bovine).